Reading from the N-terminus, the 712-residue chain is Ribosomal RNA large subunit methyltransferase K/L (712 aa).

The region spanning 43-154 (TAYRCCLWTR…GEKGVLGLDM (112 aa)) is the THUMP domain.

This sequence belongs to the methyltransferase superfamily. RlmKL family.

The protein resides in the cytoplasm. It catalyses the reaction guanosine(2445) in 23S rRNA + S-adenosyl-L-methionine = N(2)-methylguanosine(2445) in 23S rRNA + S-adenosyl-L-homocysteine + H(+). The enzyme catalyses guanosine(2069) in 23S rRNA + S-adenosyl-L-methionine = N(2)-methylguanosine(2069) in 23S rRNA + S-adenosyl-L-homocysteine + H(+). Functionally, specifically methylates the guanine in position 2445 (m2G2445) and the guanine in position 2069 (m7G2069) of 23S rRNA. The protein is Ribosomal RNA large subunit methyltransferase K/L of Photobacterium profundum (strain SS9).